We begin with the raw amino-acid sequence, 195 residues long: 22.0 kDa heat shock protein (195 aa).

A signal peptide spans 1-21 (MMKHLLSIFFIGALLLGNIKT). The sHSP domain maps to 62-180 (RDTSVALSPA…GPRVVNIAAE (119 aa)). Asn-160 carries N-linked (GlcNAc...) asparagine glycosylation.

Belongs to the small heat shock protein (HSP20) family. As to quaternary structure, may form oligomeric structures.

It is found in the endoplasmic reticulum. The protein is 22.0 kDa heat shock protein (HSP22.0) of Arabidopsis thaliana (Mouse-ear cress).